Here is a 146-residue protein sequence, read N- to C-terminus: Putative pre-16S rRNA nuclease (146 aa).

The protein belongs to the YqgF nuclease family.

The protein localises to the cytoplasm. Could be a nuclease involved in processing of the 5'-end of pre-16S rRNA. This chain is Putative pre-16S rRNA nuclease, found in Pseudomonas syringae pv. tomato (strain ATCC BAA-871 / DC3000).